The chain runs to 1610 residues: NHS-like protein 1 (1610 aa).

Phosphoserine is present on S24. Residues 145–169 (SPFCDDYQDEDEETDQKCSLSSSEE) form a disordered region. A phosphoserine mark is found at S198 and S328. The span at 433–448 (TAQSAGQRESKSSGSS) shows a compositional bias: polar residues. Disordered regions lie at residues 433 to 477 (TAQS…HWNE) and 531 to 602 (PAHP…DAGS). S568 bears the Phosphoserine mark. Polar residues predominate over residues 578–594 (GYSTPTSNMSSCSLDQT). S639 is subject to Phosphoserine. A compositionally biased stretch (polar residues) spans 649 to 667 (QKNQGDRSNYQDKSLSRNI). 5 disordered regions span residues 649–693 (QKNQ…KKSS), 715–778 (SLPG…SVKS), 791–981 (TGMQ…PPPE), 997–1535 (PRPA…GEGE), and 1566–1610 (EGGL…SEES). Low complexity predominate over residues 715 to 730 (SLPGKSGSSPSQSPCS). Composition is skewed to polar residues over residues 740-760 (SRSQ…TPNV), 767-778 (TPSQSDTSSVKS), and 851-865 (SPSS…TPTA). A compositionally biased stretch (low complexity) spans 895-928 (SLISSVSISSSSTSLSSSTSTEGSGTMKKLDPAV). Composition is skewed to pro residues over residues 929–946 (GSPP…PFPC) and 970–981 (PHSPVFPPPPPE). Over residues 1001-1011 (LSPILPDSPVS) the composition is skewed to low complexity. The segment covering 1012 to 1031 (LPLPPPLLPSSEPPPAPPLD) has biased composition (pro residues). Residues 1041–1053 (PFTNSGQPESSRG) are compositionally biased toward polar residues. S1089 bears the Phosphoserine mark. The span at 1122 to 1153 (SRNSTNEMESESQPASVTSSLPTPAKSSSQGD) shows a compositional bias: polar residues. Position 1167 is a phosphoserine (S1167). Residues 1180-1193 (PSPSTTPLPDSSPS) are compositionally biased toward low complexity. Residue S1233 is modified to Phosphoserine. Composition is skewed to basic and acidic residues over residues 1240–1249 (GSVHSREAKE) and 1373–1383 (GRRDSDDDHSR). Phosphoserine occurs at positions 1386 and 1388. T1392 carries the post-translational modification Phosphothreonine. Residues 1405-1422 (QVGSIQRSIRKSSTSSDN) show a composition bias toward polar residues. The span at 1447–1460 (KNTDPRFQRSRSEP) shows a compositional bias: basic and acidic residues. Composition is skewed to low complexity over residues 1461–1474 (SPDA…CSPS) and 1504–1516 (SRTP…SRYS).

This sequence belongs to the NHS family. As to expression, widely expressed. Expressed in adult and fetal brain, fetal eyes, adult lens, kidney, liver and intestine.

This chain is NHS-like protein 1 (NHSL1), found in Homo sapiens (Human).